A 441-amino-acid polypeptide reads, in one-letter code: Glutamate-1-semialdehyde 2,1-aminomutase (441 aa).

K275 is modified (N6-(pyridoxal phosphate)lysine).

Belongs to the class-III pyridoxal-phosphate-dependent aminotransferase family. HemL subfamily. In terms of assembly, homodimer. The cofactor is pyridoxal 5'-phosphate.

It localises to the cytoplasm. It catalyses the reaction (S)-4-amino-5-oxopentanoate = 5-aminolevulinate. The protein operates within porphyrin-containing compound metabolism; protoporphyrin-IX biosynthesis; 5-aminolevulinate from L-glutamyl-tRNA(Glu): step 2/2. This chain is Glutamate-1-semialdehyde 2,1-aminomutase, found in Deinococcus deserti (strain DSM 17065 / CIP 109153 / LMG 22923 / VCD115).